The following is a 259-amino-acid chain: UPF0246 protein PSHAa2558 (259 aa).

This sequence belongs to the UPF0246 family.

In Pseudoalteromonas translucida (strain TAC 125), this protein is UPF0246 protein PSHAa2558.